We begin with the raw amino-acid sequence, 873 residues long: Nitrate reductase [NADPH] (873 aa).

Residues 30–61 (TELDTADIPLPPPSKEPTEVLSLDKTTPDSHV) form a disordered region. Position 150 (Cys150) interacts with Mo-molybdopterin. The 76-residue stretch at 512 to 587 (TRIIDLEEFK…MPDYHIGTLD (76 aa)) folds into the Cytochrome b5 heme-binding domain. Heme-binding residues include His547 and His570. The region spanning 616–729 (KAWTKATLTK…KGPTGRFEYL (114 aa)) is the FAD-binding FR-type domain. FAD is bound by residues 672-675 (RSYT), 689-693 (LIKIY), 703-705 (KMT), and Thr756. Position 843 to 852 (843 to 852 (MVLVCGPEAM)) interacts with NADP(+).

This sequence belongs to the nitrate reductase family. As to quaternary structure, homodimer. FAD serves as cofactor. Requires heme as cofactor. It depends on Mo-molybdopterin as a cofactor.

It catalyses the reaction nitrite + NADP(+) + H2O = nitrate + NADPH + H(+). Nitrate reductase is a key enzyme involved in the first step of nitrate assimilation in plants, fungi and bacteria. The chain is Nitrate reductase [NADPH] (niaD) from Emericella nidulans (strain FGSC A4 / ATCC 38163 / CBS 112.46 / NRRL 194 / M139) (Aspergillus nidulans).